A 318-amino-acid polypeptide reads, in one-letter code: Ribosomal RNA small subunit methyltransferase A (318 aa).

Residues Asn40, Val42, Gly67, Glu88, Asp118, and Asn137 each coordinate S-adenosyl-L-methionine. Residues 295 to 305 (SADRGGTDREG) are compositionally biased toward basic and acidic residues. Positions 295–318 (SADRGGTDREGTSPPTAGQGAPAR) are disordered.

Belongs to the class I-like SAM-binding methyltransferase superfamily. rRNA adenine N(6)-methyltransferase family. RsmA subfamily.

It is found in the cytoplasm. The enzyme catalyses adenosine(1518)/adenosine(1519) in 16S rRNA + 4 S-adenosyl-L-methionine = N(6)-dimethyladenosine(1518)/N(6)-dimethyladenosine(1519) in 16S rRNA + 4 S-adenosyl-L-homocysteine + 4 H(+). Its function is as follows. Specifically dimethylates two adjacent adenosines (A1518 and A1519) in the loop of a conserved hairpin near the 3'-end of 16S rRNA in the 30S particle. May play a critical role in biogenesis of 30S subunits. The chain is Ribosomal RNA small subunit methyltransferase A from Mycolicibacterium paratuberculosis (strain ATCC BAA-968 / K-10) (Mycobacterium paratuberculosis).